The sequence spans 82 residues: Exodeoxyribonuclease 7 small subunit (82 aa).

The protein belongs to the XseB family. In terms of assembly, heterooligomer composed of large and small subunits.

It is found in the cytoplasm. The enzyme catalyses Exonucleolytic cleavage in either 5'- to 3'- or 3'- to 5'-direction to yield nucleoside 5'-phosphates.. Functionally, bidirectionally degrades single-stranded DNA into large acid-insoluble oligonucleotides, which are then degraded further into small acid-soluble oligonucleotides. The protein is Exodeoxyribonuclease 7 small subunit of Mannheimia succiniciproducens (strain KCTC 0769BP / MBEL55E).